We begin with the raw amino-acid sequence, 443 residues long: Putative rhamnogalacturonase D (443 aa).

The signal sequence occupies residues 1 to 16; the sequence is MLVTSLIALLPAIAAA. A disulfide bridge links C37 with C63. N-linked (GlcNAc...) asparagine glycans are attached at residues N47, N103, N124, and N152. The active-site Proton donor is D215. An intrachain disulfide couples C217 to C234. Residues N235, N250, N263, N276, and N281 are each glycosylated (N-linked (GlcNAc...) asparagine). A disulfide bridge links C338 with C344. Residue N346 is glycosylated (N-linked (GlcNAc...) asparagine). C366 and C375 are joined by a disulfide. N380 is a glycosylation site (N-linked (GlcNAc...) asparagine).

Belongs to the glycosyl hydrolase 28 family.

Its subcellular location is the secreted. Its function is as follows. Pectinolytic enzymes consist of four classes of enzymes: pectine lyase, polygalacturonase, pectin methylesterase and rhamnogalacturonase. Hydrolyzes alpha-D-galacturonopyranosyl-(1,2)-alpha-L-rhamnopyranosyl linkages in the backbone of the hairy regions of pectins. The polypeptide is Putative rhamnogalacturonase D (rhgD) (Aspergillus niger (strain ATCC MYA-4892 / CBS 513.88 / FGSC A1513)).